We begin with the raw amino-acid sequence, 401 residues long: Probable trafficking protein particle complex subunit 13 homolog (401 aa).

Belongs to the TRAPPC13 family.

This is Probable trafficking protein particle complex subunit 13 homolog from Caenorhabditis briggsae.